We begin with the raw amino-acid sequence, 105 residues long: uncharacterized protein (105 aa).

This is an uncharacterized protein from Bacillus subtilis (strain 168).